The primary structure comprises 147 residues: Large ribosomal subunit protein uL13 (147 aa).

It belongs to the universal ribosomal protein uL13 family. As to quaternary structure, part of the 50S ribosomal subunit.

This protein is one of the early assembly proteins of the 50S ribosomal subunit, although it is not seen to bind rRNA by itself. It is important during the early stages of 50S assembly. In Streptomyces avermitilis (strain ATCC 31267 / DSM 46492 / JCM 5070 / NBRC 14893 / NCIMB 12804 / NRRL 8165 / MA-4680), this protein is Large ribosomal subunit protein uL13.